The primary structure comprises 83 residues: MKASMYLALAGLVLLFVVGYASESEEKEFPRELLSKIFAVDDFKGEERGCKGFSDSCTPGKNECCPNYACSSKHKWCKVYLGK.

A signal peptide spans 1–21; sequence MKASMYLALAGLVLLFVVGYA. The propeptide occupies 22 to 48; that stretch reads SESEEKEFPRELLSKIFAVDDFKGEER. Cystine bridges form between Cys50-Cys65, Cys57-Cys70, and Cys64-Cys77. Residue Leu81 is modified to Leucine amide.

This sequence belongs to the neurotoxin 10 (Hwtx-1) family. 15 (Hntx-3) subfamily. As to quaternary structure, monomer. Expressed by the venom gland.

It localises to the secreted. Its function is as follows. Lethal neurotoxin. Selectively blocks tetrodotoxin-sensitive voltage-gated sodium channels (Nav). Does not affect tetrodotoxin-resistant voltage-gated sodium channels or calcium channels. This Cyriopagopus hainanus (Chinese bird spider) protein is Mu-theraphotoxin-Hhn2n.